The following is a 205-amino-acid chain: Small ribosomal subunit protein uS4 (205 aa).

The segment covering 1–16 has biased composition (basic and acidic residues); the sequence is MSKRESSKYKIDRRMG. Positions 1–46 are disordered; it reads MSKRESSKYKIDRRMGENIWGRPKSPVNRREYGPGQHGQRRKGKLS. Residues 94 to 157 form the S4 RNA-binding domain; sequence SRLDAIVYRA…KQLVTVLEAV (64 aa).

It belongs to the universal ribosomal protein uS4 family. In terms of assembly, part of the 30S ribosomal subunit. Contacts protein S5. The interaction surface between S4 and S5 is involved in control of translational fidelity.

One of the primary rRNA binding proteins, it binds directly to 16S rRNA where it nucleates assembly of the body of the 30S subunit. In terms of biological role, with S5 and S12 plays an important role in translational accuracy. The chain is Small ribosomal subunit protein uS4 from Rhizobium etli (strain ATCC 51251 / DSM 11541 / JCM 21823 / NBRC 15573 / CFN 42).